The sequence spans 221 residues: RNA pyrophosphohydrolase (221 aa).

The Nudix hydrolase domain occupies Gly6–Thr149. A Nudix box motif is present at residues Gly38–Gly59.

It belongs to the Nudix hydrolase family. RppH subfamily. A divalent metal cation is required as a cofactor.

In terms of biological role, accelerates the degradation of transcripts by removing pyrophosphate from the 5'-end of triphosphorylated RNA, leading to a more labile monophosphorylated state that can stimulate subsequent ribonuclease cleavage. The chain is RNA pyrophosphohydrolase from Verminephrobacter eiseniae (strain EF01-2).